A 580-amino-acid chain; its full sequence is YTH domain-containing family protein 2 (580 aa).

The interval 1-45 is disordered; it reads MSASSLLEQRPKGQGNKVQNGSVHQKDGLNDDDFEPYLSPQARPN. The residue at position 2 (Ser-2) is an N-acetylserine. Phosphoserine is present on residues Ser-2, Ser-4, Ser-5, Ser-22, Ser-39, and Ser-196. The segment at 2–385 is localization to mRNA processing bodies (P-bodies); the sequence is SASSLLEQRP…QAGSGSTPSE (384 aa). The tract at residues 247–388 is disordered; it reads AKQQPKLKTK…SGSTPSEPHP (142 aa). The span at 291-317 shows a compositional bias: polar residues; that stretch reads ALVQNIGQQPTQGSPQPVGQQANNSPP. A compositionally biased stretch (low complexity) spans 338-350; it reads AQLSVQQQAAQPT. Ser-360 is modified (phosphoserine). Residues 360–372 are compositionally biased toward gly residues; sequence SGFGHNGVDGNGV. Residues 373–384 are compositionally biased toward polar residues; it reads GQTQAGSGSTPS. Positions 386-580 are interaction with m6A-containing mRNAs; the sequence is PHPVLEKLRS…VKKERQGRGK (195 aa). A Phosphoserine modification is found at Ser-395. Positions 411-545 constitute a YTH domain; sequence GRVFIIKSYS…EKAKQVLKII (135 aa). Residues 417-419, Asp-423, 433-434, Asn-463, Trp-487, and Trp-492 contribute to the RNA site; these read KSY and WC.

Belongs to the YTHDF family. YTHDF2 subfamily. In terms of assembly, interacts with CNOT1; interaction is direct and promotes recruitment of the CCR4-NOT complex. Interacts with YTHDF3. Interacts with RIDA/HRSP12; interaction leads to recruitment of the ribonuclease P/MRP complex. Post-translationally, ubiquitinated by the SCF(SKP2) complex, leading to its degradation.

Its subcellular location is the cytoplasm. It is found in the cytosol. The protein localises to the P-body. The protein resides in the stress granule. It localises to the nucleus. Specifically recognizes and binds N6-methyladenosine (m6A)-containing RNAs, and regulates their stability. M6A is a modification present at internal sites of mRNAs and some non-coding RNAs and plays a role in mRNA stability and processing. Acts as a regulator of mRNA stability by promoting degradation of m6A-containing mRNAs via interaction with the CCR4-NOT and ribonuclease P/MRP complexes, depending on the context. The YTHDF paralogs (YTHDF1, YTHDF2 and YTHDF3) share m6A-containing mRNAs targets and act redundantly to mediate mRNA degradation and cellular differentiation. M6A-containing mRNAs containing a binding site for RIDA/HRSP12 (5'-GGUUC-3') are preferentially degraded by endoribonucleolytic cleavage: cooperative binding of RIDA/HRSP12 and YTHDF2 to transcripts leads to recruitment of the ribonuclease P/MRP complex. Other m6A-containing mRNAs undergo deadenylation via direct interaction between YTHDF2 and CNOT1, leading to recruitment of the CCR4-NOT and subsequent deadenylation of m6A-containing mRNAs. Required maternally to regulate oocyte maturation: probably acts by binding to m6A-containing mRNAs, thereby regulating maternal transcript dosage during oocyte maturation, which is essential for the competence of oocytes to sustain early zygotic development. Also required during spermatogenesis: regulates spermagonial adhesion by promoting degradation of m6A-containing transcripts coding for matrix metallopeptidases. Also involved in hematopoietic stem cells specification by binding to m6A-containing mRNAs, leading to promote their degradation. Also acts as a regulator of neural development by promoting m6A-dependent degradation of neural development-related mRNA targets. Inhibits neural specification of induced pluripotent stem cells by binding to methylated neural-specific mRNAs and promoting their degradation, thereby restraining neural differentiation. Regulates circadian regulation of hepatic lipid metabolism: acts by promoting m6A-dependent degradation of PPARA transcripts. Regulates the innate immune response to infection by inhibiting the type I interferon response: acts by binding to m6A-containing IFNB transcripts and promoting their degradation. May also act as a promoter of cap-independent mRNA translation following heat shock stress: upon stress, relocalizes to the nucleus and specifically binds mRNAs with some m6A methylation mark at their 5'-UTR, protecting demethylation of mRNAs by FTO, thereby promoting cap-independent mRNA translation. Regulates mitotic entry by promoting the phase-specific m6A-dependent degradation of WEE1 transcripts. Promotes formation of phase-separated membraneless compartments, such as P-bodies or stress granules, by undergoing liquid-liquid phase separation upon binding to mRNAs containing multiple m6A-modified residues: polymethylated mRNAs act as a multivalent scaffold for the binding of YTHDF proteins, juxtaposing their disordered regions and thereby leading to phase separation. The resulting mRNA-YTHDF complexes then partition into different endogenous phase-separated membraneless compartments, such as P-bodies, stress granules or neuronal RNA granules. May also recognize and bind RNAs modified by C5-methylcytosine (m5C) and act as a regulator of rRNA processing. The protein is YTH domain-containing family protein 2 of Bos taurus (Bovine).